We begin with the raw amino-acid sequence, 122 residues long: uncharacterized protein (122 aa).

The protein resides in the mitochondrion. This is an uncharacterized protein from Arabidopsis thaliana (Mouse-ear cress).